Here is a 371-residue protein sequence, read N- to C-terminus: 4-hydroxyphenylpyruvate dioxygenase-like protein (371 aa).

VOC domains follow at residues Arg-7 to Arg-135 and Arg-160 to Lys-328. His-163, His-258, and Glu-339 together coordinate Fe cation.

It belongs to the 4HPPD family. Fe cation serves as cofactor.

Its subcellular location is the mitochondrion. It carries out the reaction 3-(4-hydroxyphenyl)pyruvate + O2 = (S)-4-hydroxymandelate + CO2. Iron-dependent dioxygenase that catalyzes the conversion of 4-hydroxyphenylpyruvate (4-HPPA) to 4-hydroxymandelate (4-HMA) in the mitochondria, one of the steps in the biosynthesis of coenzyme Q10 from tyrosine. This Homo sapiens (Human) protein is 4-hydroxyphenylpyruvate dioxygenase-like protein.